The chain runs to 227 residues: 7-cyano-7-deazaguanine synthase (227 aa).

An ATP-binding site is contributed by 7 to 17 (LSGGMDSLVTT). Residues Cys-187, Cys-195, Cys-198, and Cys-201 each contribute to the Zn(2+) site.

It belongs to the QueC family. Zn(2+) serves as cofactor.

It carries out the reaction 7-carboxy-7-deazaguanine + NH4(+) + ATP = 7-cyano-7-deazaguanine + ADP + phosphate + H2O + H(+). Its pathway is purine metabolism; 7-cyano-7-deazaguanine biosynthesis. Its function is as follows. Catalyzes the ATP-dependent conversion of 7-carboxy-7-deazaguanine (CDG) to 7-cyano-7-deazaguanine (preQ(0)). In Chlorobium luteolum (strain DSM 273 / BCRC 81028 / 2530) (Pelodictyon luteolum), this protein is 7-cyano-7-deazaguanine synthase.